The sequence spans 376 residues: UDP-N-acetylglucosamine 2-epimerase (376 aa).

Substrate is bound by residues Arg-10, Lys-15, Asp-95, Glu-117, His-213, Gln-271, Phe-276, 290–292 (SGG), Glu-296, and Arg-313.

Belongs to the UDP-N-acetylglucosamine 2-epimerase family. As to quaternary structure, homodimer.

The protein localises to the cytoplasm. The enzyme catalyses UDP-N-acetyl-alpha-D-glucosamine = UDP-N-acetyl-alpha-D-mannosamine. Its pathway is bacterial outer membrane biogenesis; enterobacterial common antigen biosynthesis. Its activity is regulated as follows. Allosterically activated by its substrate, UDP-GlcNAc. Catalyzes the reversible epimerization at C-2 of UDP-N-acetylglucosamine (UDP-GlcNAc) and thereby provides bacteria with UDP-N-acetylmannosamine (UDP-ManNAc), the activated donor of ManNAc residues. Also involved in bacteriophage N4 adsorption. The sequence is that of UDP-N-acetylglucosamine 2-epimerase from Escherichia coli (strain K12).